A 340-amino-acid polypeptide reads, in one-letter code: Phosphoribosylformylglycinamidine cyclo-ligase (340 aa).

This sequence belongs to the AIR synthase family.

It is found in the cytoplasm. The enzyme catalyses 2-formamido-N(1)-(5-O-phospho-beta-D-ribosyl)acetamidine + ATP = 5-amino-1-(5-phospho-beta-D-ribosyl)imidazole + ADP + phosphate + H(+). It participates in purine metabolism; IMP biosynthesis via de novo pathway; 5-amino-1-(5-phospho-D-ribosyl)imidazole from N(2)-formyl-N(1)-(5-phospho-D-ribosyl)glycinamide: step 2/2. The polypeptide is Phosphoribosylformylglycinamidine cyclo-ligase (Streptococcus agalactiae serotype III (strain NEM316)).